Here is a 66-residue protein sequence, read N- to C-terminus: Potassium channel toxin alpha-KTx 30.3 (66 aa).

The first 24 residues, 1 to 24 (MNKTFFLVVIMATVLVLAFDATDA), serve as a signal peptide directing secretion. 3 disulfide bridges follow: Cys-30–Cys-50, Cys-36–Cys-55, and Cys-40–Cys-57.

This sequence belongs to the short scorpion toxin superfamily. Potassium channel inhibitor family. Alpha-KTx 30 subfamily. As to expression, expressed by the venom gland.

The protein resides in the secreted. Its function is as follows. inhibits Kv1.3/KCNA3 channel. In Scorpiops jendeki (Scorpion), this protein is Potassium channel toxin alpha-KTx 30.3.